A 188-amino-acid chain; its full sequence is Photosystem I assembly protein Ycf4 (188 aa).

Transmembrane regions (helical) follow at residues 26 to 46 (YFWA…GLSS) and 68 to 88 (LVMG…WFVI).

Belongs to the Ycf4 family.

It localises to the cellular thylakoid membrane. Functionally, seems to be required for the assembly of the photosystem I complex. The polypeptide is Photosystem I assembly protein Ycf4 (Synechococcus sp. (strain ATCC 27144 / PCC 6301 / SAUG 1402/1) (Anacystis nidulans)).